A 401-amino-acid chain; its full sequence is Imidazolonepropionase (401 aa).

2 residues coordinate Fe(3+): histidine 70 and histidine 72. Residues histidine 70 and histidine 72 each contribute to the Zn(2+) site. 4-imidazolone-5-propanoate-binding residues include arginine 79, tyrosine 142, and histidine 175. Residue tyrosine 142 coordinates N-formimidoyl-L-glutamate. Residue histidine 238 coordinates Fe(3+). Residue histidine 238 participates in Zn(2+) binding. Glutamine 241 serves as a coordination point for 4-imidazolone-5-propanoate. Aspartate 313 contributes to the Fe(3+) binding site. Position 313 (aspartate 313) interacts with Zn(2+). Positions 315 and 317 each coordinate N-formimidoyl-L-glutamate. Threonine 318 serves as a coordination point for 4-imidazolone-5-propanoate.

This sequence belongs to the metallo-dependent hydrolases superfamily. HutI family. The cofactor is Zn(2+). Fe(3+) is required as a cofactor.

It localises to the cytoplasm. The enzyme catalyses 4-imidazolone-5-propanoate + H2O = N-formimidoyl-L-glutamate. It functions in the pathway amino-acid degradation; L-histidine degradation into L-glutamate; N-formimidoyl-L-glutamate from L-histidine: step 3/3. Its function is as follows. Catalyzes the hydrolytic cleavage of the carbon-nitrogen bond in imidazolone-5-propanoate to yield N-formimidoyl-L-glutamate. It is the third step in the universal histidine degradation pathway. The polypeptide is Imidazolonepropionase (Xanthomonas oryzae pv. oryzae (strain MAFF 311018)).